A 217-amino-acid polypeptide reads, in one-letter code: Nitrile hydratase subunit beta (217 aa).

The protein belongs to the nitrile hydratase subunit beta family. As to quaternary structure, heterodimer of an alpha and a beta chain.

It carries out the reaction an aliphatic primary amide = an aliphatic nitrile + H2O. NHase catalyzes the hydration of various nitrile compounds to the corresponding amides. The polypeptide is Nitrile hydratase subunit beta (nthB) (Pseudomonas putida (Arthrobacter siderocapsulatus)).